Consider the following 346-residue polypeptide: Isopentenyl-diphosphate delta-isomerase (346 aa).

12 to 13 contacts substrate; it reads RK. Residues 67–69, Ser97, and Asn126 contribute to the FMN site; that span reads ALT. Residue 97-99 coordinates substrate; sequence SQR. Substrate is bound at residue Gln156. Residue Glu157 participates in Mg(2+) binding. Residues Lys188, Thr218, 263-265, and 284-285 each bind FMN; these read GIR and AG.

It belongs to the IPP isomerase type 2 family. Homooctamer. Dimer of tetramers. The cofactor is FMN. It depends on NADPH as a cofactor. Mg(2+) serves as cofactor.

The protein resides in the cytoplasm. The catalysed reaction is isopentenyl diphosphate = dimethylallyl diphosphate. Functionally, involved in the biosynthesis of isoprenoids. Catalyzes the 1,3-allylic rearrangement of the homoallylic substrate isopentenyl (IPP) to its allylic isomer, dimethylallyl diphosphate (DMAPP). This chain is Isopentenyl-diphosphate delta-isomerase, found in Moorella thermoacetica (strain ATCC 39073 / JCM 9320).